A 352-amino-acid chain; its full sequence is uncharacterized protein (352 aa).

It to Synechocystis PCC 6803 slr0039.

This is an uncharacterized protein from Archaeoglobus fulgidus (strain ATCC 49558 / DSM 4304 / JCM 9628 / NBRC 100126 / VC-16).